The chain runs to 263 residues: Probable septum site-determining protein MinC (263 aa).

Residues 107 to 159 (LPPSGARERPLDIKDSAPRKPAEEPSPSAGEARPEPAKAEEKPADPVSRPTKV) are disordered. 2 stretches are compositionally biased toward basic and acidic residues: residues 112–129 (ARER…KPAE) and 138–150 (ARPE…EKPA).

It belongs to the MinC family. In terms of assembly, interacts with MinD and FtsZ.

Functionally, cell division inhibitor that blocks the formation of polar Z ring septums. Rapidly oscillates between the poles of the cell to destabilize FtsZ filaments that have formed before they mature into polar Z rings. Prevents FtsZ polymerization. The polypeptide is Probable septum site-determining protein MinC (Pseudomonas aeruginosa (strain UCBPP-PA14)).